The sequence spans 880 residues: Alanine--tRNA ligase (880 aa).

Positions 565, 569, 675, and 679 each coordinate Zn(2+).

Belongs to the class-II aminoacyl-tRNA synthetase family. The cofactor is Zn(2+).

The protein localises to the cytoplasm. The catalysed reaction is tRNA(Ala) + L-alanine + ATP = L-alanyl-tRNA(Ala) + AMP + diphosphate. Catalyzes the attachment of alanine to tRNA(Ala) in a two-step reaction: alanine is first activated by ATP to form Ala-AMP and then transferred to the acceptor end of tRNA(Ala). Also edits incorrectly charged Ser-tRNA(Ala) and Gly-tRNA(Ala) via its editing domain. This chain is Alanine--tRNA ligase, found in Granulibacter bethesdensis (strain ATCC BAA-1260 / CGDNIH1).